A 348-amino-acid chain; its full sequence is Rhodopsin (348 aa).

M1 is subject to N-acetylmethionine. The Extracellular portion of the chain corresponds to 1-36; that stretch reads MNGTEGPNFYVPFSNATGVVRSPFEYPQYYLAEPWQ. N-linked (GlcNAc...) asparagine glycans are attached at residues N2 and N15. A helical transmembrane segment spans residues 37-61; the sequence is FSMLAAYMFLLIVLGFPINFLTLYV. Topologically, residues 62-73 are cytoplasmic; it reads TVQHKKLRTPLN. The chain crosses the membrane as a helical span at residues 74-96; that stretch reads YILLNLAVADLFMVLGGFTSTLY. Topologically, residues 97-110 are extracellular; the sequence is TSLHGYFVFGPTGC. Cysteines 110 and 187 form a disulfide. Residues 111-133 traverse the membrane as a helical segment; it reads NLEGFFATLGGEIALWSLVVLAI. The 'Ionic lock' involved in activated form stabilization motif lies at 134 to 136; that stretch reads ERY. The Cytoplasmic portion of the chain corresponds to 134-152; that stretch reads ERYVVVCKPMSNFRFGENH. A helical transmembrane segment spans residues 153–173; that stretch reads AIMGVAFTWVMALACAAPPLA. The Extracellular portion of the chain corresponds to 174-202; sequence GWSRYIPEGLQCSCGIDYYTLKPEVNNES. E201 is a Zn(2+) binding site. The chain crosses the membrane as a helical span at residues 203-224; that stretch reads FVIYMFVVHFTIPMIIIFFCYG. The Cytoplasmic portion of the chain corresponds to 225–252; sequence QLVFTVKEAAAQQQESATTQKAEKEVTR. The chain crosses the membrane as a helical span at residues 253 to 274; the sequence is MVIIMVIAFLICWVPYASVAFY. The Extracellular segment spans residues 275-284; sequence IFTHQGSNFG. Q279 is a binding site for Zn(2+). The helical transmembrane segment at 285-309 threads the bilayer; the sequence is PIFMTIPAFFAKSAAIYNPVIYIMM. Position 296 is an N6-(retinylidene)lysine (K296). Topologically, residues 310 to 348 are cytoplasmic; the sequence is NKQFRNCMLTTICCGKNPLGDDEASATVSKTETSQVAPA. 2 S-palmitoyl cysteine lipidation sites follow: C322 and C323. The segment at 330–348 is interaction with SAG; it reads DDEASATVSKTETSQVAPA. Position 334 is a phosphoserine (S334). Residue T336 is modified to Phosphothreonine. At S338 the chain carries Phosphoserine. T340 and T342 each carry phosphothreonine. Position 343 is a phosphoserine (S343).

This sequence belongs to the G-protein coupled receptor 1 family. Opsin subfamily. As to quaternary structure, homodimer. May form a complex composed of RHO, GRK1 and RCVRN in a Ca(2+)-dependent manner; RCVRN prevents the interaction between GRK1 and RHO. Interacts with GRK1. Interacts (phosphorylated form) with SAG. Interacts with GNAT1. Interacts with GNAT3. SAG and G-proteins compete for a common binding site. Interacts with PRCD; the interaction promotes PRCD stability. Forms a complex with ASAP1 and ARF4. Forms a complex with ASAP1, RAB11A, Rabin8/RAB3IP, ARF4 and RAB11FIP3; the complex regulates Golgi-to-cilia rhodopsin/RHO transport in photoreceptors. Post-translationally, phosphorylated on some or all of the serine and threonine residues present in the C-terminal region. After activation by light, phosphorylated by GRK1 (in vitro). In terms of processing, contains one covalently linked retinal chromophore. Upon light absorption, the covalently bound 11-cis-retinal is converted to all-trans-retinal. After hydrolysis of the Schiff base and release of the covalently bound all-trans-retinal, active rhodopsin is regenerated by binding of a fresh molecule of 11-cis-retinal. Rod shaped photoreceptor cells which mediate vision in dim light.

It is found in the membrane. Its subcellular location is the cell projection. The protein localises to the cilium. The protein resides in the photoreceptor outer segment. Photoreceptor required for image-forming vision at low light intensity. Required for photoreceptor cell viability after birth. Light-induced isomerization of the chromophore 11-cis-retinal to all-trans-retinal triggers a conformational change that activates signaling via G-proteins. Subsequent receptor phosphorylation mediates displacement of the bound G-protein alpha subunit by the arrestin SAG and terminates signaling. This Homo sapiens (Human) protein is Rhodopsin (RHO).